A 185-amino-acid polypeptide reads, in one-letter code: Ribosome-recycling factor (185 aa).

This sequence belongs to the RRF family.

The protein resides in the cytoplasm. Functionally, responsible for the release of ribosomes from messenger RNA at the termination of protein biosynthesis. May increase the efficiency of translation by recycling ribosomes from one round of translation to another. This Alkalilimnicola ehrlichii (strain ATCC BAA-1101 / DSM 17681 / MLHE-1) protein is Ribosome-recycling factor.